The following is a 352-amino-acid chain: Ion-translocating oxidoreductase complex subunit D (352 aa).

Helical transmembrane passes span 20–40 (IMLL…WFFG), 42–62 (GTLV…ALVL), 78–109 (ALLT…VIIA), 123–143 (PAMI…TSWL), and 148–168 (IAVN…GHIT). Thr187 is modified (FMN phosphoryl threonine). A run of 5 helical transmembrane segments spans residues 215 to 235 (LAGV…VWLL), 242 to 262 (WHIP…GWLF), 267 to 287 (LAAP…FFIL), 301 to 321 (LIFG…GGYP), and 322 to 342 (DGVA…DYYT).

It belongs to the NqrB/RnfD family. In terms of assembly, the complex is composed of six subunits: RsxA, RsxB, RsxC, RsxD, RsxE and RsxG. It depends on FMN as a cofactor.

The protein resides in the cell inner membrane. In terms of biological role, part of a membrane-bound complex that couples electron transfer with translocation of ions across the membrane. Required to maintain the reduced state of SoxR. In Escherichia coli (strain SMS-3-5 / SECEC), this protein is Ion-translocating oxidoreductase complex subunit D.